We begin with the raw amino-acid sequence, 525 residues long: MHRAPSPTAEQPPGRGDNTRRTPQPRFKASAPAMALPRTLGELQLYRVLQRANLLSYYETFIQQGGDDVQQLCEAGEEEFLEIMALVGMATKPLHVRRLQKALREWATNPGLFSQPVPAVPVSSIPLFKISETAGTRKGSMSNGHGSPGEKAGSARSFSPKSPLELGEKLSPLPGGPGAGDPRIWPGQSTPESDVGAGGEEEAGSPPFSPPAGGGVSEGPGVGGVAAGGAGGGPDRLEPEMVRMVVESVERIFRSFPRGDTGEIASLLKLNKKLARSVGHIFEMDDHDAQKEEEIRKYSVIYGRLDSKRREGKQLSLHELTINEAAAQFCMRDNTLLLRRVELFSLSRQVARESTYLSSLKGSRLHSEELGGPPLKKLKQEVGEQSHNEIQQPPPGPESYAPPYRPSLEEDSASLSGESLDGHLQAVGSCPRLTPPPADLPLALPAHGLWSRHILQQTLMDEGLRLARLVSHDRVGRLSPCVPAKPPLAEFEEGLLDRCPAPGPHPALVEGRRSSVKVEAEASRQ.

The interval 1–31 (MHRAPSPTAEQPPGRGDNTRRTPQPRFKASA) is disordered. At S6 the chain carries Phosphoserine. Residues 35–113 (ALPRTLGELQ…REWATNPGLF (79 aa)) form an NCD1 region. The tract at residues 135–238 (GTRKGSMSNG…GAGGGPDRLE (104 aa)) is disordered. Phosphoserine occurs at positions 157, 159, 162, and 171. Residues 212–234 (AGGGVSEGPGVGGVAAGGAGGGP) are compositionally biased toward gly residues. The NCD2 stretch occupies residues 267–356 (LLKLNKKLAR…SRQVARESTY (90 aa)). Residues 353-384 (ESTYLSSLKGSRLHSEELGGPPLKKLKQEVGE) are necessary for nuclear localization. K379 is covalently cross-linked (Glycyl lysine isopeptide (Lys-Gly) (interchain with G-Cter in SUMO1)). The disordered stretch occupies residues 381-416 (EVGEQSHNEIQQPPPGPESYAPPYRPSLEEDSASLS). A Phosphoserine modification is found at S479. Residues 501-525 (APGPHPALVEGRRSSVKVEAEASRQ) form a disordered region. Positions 510–525 (EGRRSSVKVEAEASRQ) are enriched in basic and acidic residues. K517 is covalently cross-linked (Glycyl lysine isopeptide (Lys-Gly) (interchain with G-Cter in SUMO1); alternate). A Glycyl lysine isopeptide (Lys-Gly) (interchain with G-Cter in SUMO2); alternate cross-link involves residue K517.

Belongs to the NAB family. Homomultimers may associate with EGR1 bound to DNA. In terms of processing, sumoylation by EGR2 represses EGR2 transcriptional activity in hindbrain. In terms of tissue distribution, highly expressed in brain and thymus, and at lower levels in spleen, kidney, heart and testis. Isoform 1 is predominantly expressed in testis, whereas isoform 3 is more abundant in thymus.

The protein resides in the nucleus. Its function is as follows. Acts as a transcriptional repressor for zinc finger transcription factors EGR1 and EGR2. Isoform 2 lacks repression ability. The polypeptide is NGFI-A-binding protein 2 (Nab2) (Mus musculus (Mouse)).